The primary structure comprises 209 residues: Uracil phosphoribosyltransferase (209 aa).

5-phospho-alpha-D-ribose 1-diphosphate-binding positions include Arg-79, Arg-104, and 131-139; that span reads DPMLATGGS. Residues Ile-194 and 199–201 each bind uracil; that span reads GDA. Asp-200 is a 5-phospho-alpha-D-ribose 1-diphosphate binding site.

The protein belongs to the UPRTase family. Mg(2+) is required as a cofactor.

It catalyses the reaction UMP + diphosphate = 5-phospho-alpha-D-ribose 1-diphosphate + uracil. Its pathway is pyrimidine metabolism; UMP biosynthesis via salvage pathway; UMP from uracil: step 1/1. Allosterically activated by GTP. In terms of biological role, catalyzes the conversion of uracil and 5-phospho-alpha-D-ribose 1-diphosphate (PRPP) to UMP and diphosphate. The chain is Uracil phosphoribosyltransferase from Geobacter sp. (strain M21).